The primary structure comprises 59 residues: Putative conotoxin (59 aa).

The N-terminal stretch at 1 to 25 (MGMRMMFTVFLLVVLATTVVPITLA) is a signal peptide. Positions 26 to 47 (SATDGRNAAANARVSPVISKSS) are excised as a propeptide.

It belongs to the conotoxin A superfamily. In terms of tissue distribution, expressed by the venom duct.

The protein localises to the secreted. Functionally, acts as a neurotoxin. The protein is Putative conotoxin of Conus imperialis (Imperial cone).